The sequence spans 729 residues: Elongation factor 2 (729 aa).

Residues 19-262 enclose the tr-type G domain; the sequence is EQIRNIAIAA…MVCEHFPNPV (244 aa). GTP-binding positions include 28–35, 94–98, and 148–151; these read AHVDHGKT, DTPGH, and NKVD. His-597 carries the post-translational modification Diphthamide.

This sequence belongs to the TRAFAC class translation factor GTPase superfamily. Classic translation factor GTPase family. EF-G/EF-2 subfamily.

It is found in the cytoplasm. In terms of biological role, catalyzes the GTP-dependent ribosomal translocation step during translation elongation. During this step, the ribosome changes from the pre-translocational (PRE) to the post-translocational (POST) state as the newly formed A-site-bound peptidyl-tRNA and P-site-bound deacylated tRNA move to the P and E sites, respectively. Catalyzes the coordinated movement of the two tRNA molecules, the mRNA and conformational changes in the ribosome. The protein is Elongation factor 2 of Natronomonas pharaonis (strain ATCC 35678 / DSM 2160 / CIP 103997 / JCM 8858 / NBRC 14720 / NCIMB 2260 / Gabara) (Halobacterium pharaonis).